The sequence spans 348 residues: E3 ubiquitin-protein ligase MARCHF9 (348 aa).

The disordered stretch occupies residues 48 to 96 (ARDGDGDEEEYYGSEPRARGLAGDKEPRAGPPPPPAPPPPPPGALDALS). A compositionally biased stretch (basic and acidic residues) spans 63-75 (PRARGLAGDKEPR). Residues 76–90 (AGPPPPPAPPPPPPG) show a composition bias toward pro residues. The RING-CH-type zinc finger occupies 102–162 (DSGLRTPQCR…ELCYFKYQVL (61 aa)). Residues Cys110, Cys113, Cys126, Cys128, His136, Cys139, Cys152, and Cys155 each coordinate Zn(2+). A run of 2 helical transmembrane segments spans residues 185–205 (IAAI…LIWS) and 219–239 (LFQI…GLIV). Disordered stretches follow at residues 272–304 (GDTG…AAQR) and 328–348 (PPDA…VTTV).

Homodimer.

It localises to the golgi apparatus membrane. The protein localises to the lysosome membrane. The enzyme catalyses S-ubiquitinyl-[E2 ubiquitin-conjugating enzyme]-L-cysteine + [acceptor protein]-L-lysine = [E2 ubiquitin-conjugating enzyme]-L-cysteine + N(6)-ubiquitinyl-[acceptor protein]-L-lysine.. Its pathway is protein modification; protein ubiquitination. E3 ubiquitin-protein ligase that may mediate ubiquitination of MHC-I, CD4 and ICAM1, and promote their subsequent endocytosis and sorting to lysosomes via multivesicular bodies. E3 ubiquitin ligases accept ubiquitin from an E2 ubiquitin-conjugating enzyme in the form of a thioester and then directly transfer the ubiquitin to targeted substrates. This Mus musculus (Mouse) protein is E3 ubiquitin-protein ligase MARCHF9 (Marchf9).